Reading from the N-terminus, the 229-residue chain is MGNASFGSKEQKLLKRLRLLPALLILRAFKPHRKIRDYRVVVVGTAGVGKSTLLHKWASGNFRHEYLPTIENTYCQLLGCSHGVLSLHITDSKSGDGNRALQRHVIARGHAFVLVYSVTKKETLEELKAFYELICKIKGNNLHKFPIVLVGNKSDDTHREVALNDGATCAMEWNCAFMEISAKTDVNVQELFHMLLNYKKKPTTGLQEPEKKSQMPNTTEKLLDKCIIM.

Residues 44–51 (GTAGVGKS), 63–69 (RHEYLPT), 91–95 (DSKSG), 152–155 (NKSD), and 182–183 (AK) contribute to the GTP site. Positions 66–74 (YLPTIENTY) match the Effector region motif. The residue at position 226 (cysteine 226) is a Cysteine methyl ester. Cysteine 226 carries S-geranylgeranyl cysteine lipidation. Positions 227 to 229 (IIM) are cleaved as a propeptide — removed in mature form.

The protein belongs to the small GTPase superfamily. Di-Ras family. In terms of tissue distribution, expressed in normal ovarian and breast epithelial cells but not in ovarian and breast cancers.

Its subcellular location is the cell membrane. The sequence is that of GTP-binding protein Di-Ras3 (DIRAS3) from Homo sapiens (Human).